The chain runs to 112 residues: Putative pterin-4-alpha-carbinolamine dehydratase (112 aa).

This sequence belongs to the pterin-4-alpha-carbinolamine dehydratase family.

The catalysed reaction is (4aS,6R)-4a-hydroxy-L-erythro-5,6,7,8-tetrahydrobiopterin = (6R)-L-erythro-6,7-dihydrobiopterin + H2O. This chain is Putative pterin-4-alpha-carbinolamine dehydratase, found in Shewanella denitrificans (strain OS217 / ATCC BAA-1090 / DSM 15013).